Consider the following 75-residue polypeptide: DNA-directed RNA polymerase subunit omega (75 aa).

It belongs to the RNA polymerase subunit omega family. As to quaternary structure, in cyanobacteria the RNAP catalytic core is composed of 2 alpha, 1 beta, 1 beta', 1 gamma and 1 omega subunit. When a sigma factor is associated with the core the holoenzyme is formed, which can initiate transcription.

The catalysed reaction is RNA(n) + a ribonucleoside 5'-triphosphate = RNA(n+1) + diphosphate. Its function is as follows. Promotes RNA polymerase assembly. Latches the N- and C-terminal regions of the beta' subunit thereby facilitating its interaction with the beta and alpha subunits. The sequence is that of DNA-directed RNA polymerase subunit omega from Parasynechococcus marenigrum (strain WH8102).